A 218-amino-acid polypeptide reads, in one-letter code: Synaptonemal complex central element protein 2 (218 aa).

The span at 1 to 32 (MERQGVDVPHVKCKDQEPQPLGESKEHPRWEE) shows a compositional bias: basic and acidic residues. The disordered stretch occupies residues 1 to 42 (MERQGVDVPHVKCKDQEPQPLGESKEHPRWEENCEEEAGGGP). The stretch at 61 to 87 (SSLDSSIDILQKRAQELIENINKSRQK) forms a coiled coil. Residues 171-218 (RWGPDHSRGKSPPRPGNSQPPDVFVSSVAETTSQATASEVQTNRDGEC) are disordered. A compositionally biased stretch (polar residues) spans 198–211 (VAETTSQATASEVQ).

The protein belongs to the SYCE family. As to quaternary structure, homodimer. Found in a complex with SYCP1 and SYCE1. Interacts with SYCP1, SYCE1 and SYCE3. Interacts with TEX12.

It is found in the nucleus. Its subcellular location is the chromosome. Major component of the transverse central element of synaptonemal complexes (SCS), formed between homologous chromosomes during meiotic prophase. Requires SYCP1 in order to be incorporated into the central element. May have a role in the synaptonemal complex assembly, stabilization and recombination. The polypeptide is Synaptonemal complex central element protein 2 (SYCE2) (Homo sapiens (Human)).